The following is a 509-amino-acid chain: UDP-N-acetylmuramoyl-L-alanyl-D-glutamate--2,6-diaminopimelate ligase (509 aa).

Ser-30 lines the UDP-N-acetyl-alpha-D-muramoyl-L-alanyl-D-glutamate pocket. ATP is bound at residue 110–116 (GTNGKTT). UDP-N-acetyl-alpha-D-muramoyl-L-alanyl-D-glutamate is bound by residues 152–153 (TT), Ser-179, Gln-185, and Arg-187. Lys-219 bears the N6-carboxylysine mark. Meso-2,6-diaminopimelate is bound by residues Arg-385, 409–412 (DNPR), Gly-476, and Glu-480. A Meso-diaminopimelate recognition motif motif is present at residues 409–412 (DNPR).

This sequence belongs to the MurCDEF family. MurE subfamily. Mg(2+) is required as a cofactor. Carboxylation is probably crucial for Mg(2+) binding and, consequently, for the gamma-phosphate positioning of ATP.

Its subcellular location is the cytoplasm. It catalyses the reaction UDP-N-acetyl-alpha-D-muramoyl-L-alanyl-D-glutamate + meso-2,6-diaminopimelate + ATP = UDP-N-acetyl-alpha-D-muramoyl-L-alanyl-gamma-D-glutamyl-meso-2,6-diaminopimelate + ADP + phosphate + H(+). Its pathway is cell wall biogenesis; peptidoglycan biosynthesis. Its function is as follows. Catalyzes the addition of meso-diaminopimelic acid to the nucleotide precursor UDP-N-acetylmuramoyl-L-alanyl-D-glutamate (UMAG) in the biosynthesis of bacterial cell-wall peptidoglycan. The protein is UDP-N-acetylmuramoyl-L-alanyl-D-glutamate--2,6-diaminopimelate ligase of Geobacter sulfurreducens (strain ATCC 51573 / DSM 12127 / PCA).